The sequence spans 369 residues: tRNA 2-selenouridine synthase (369 aa).

Positions 12-136 constitute a Rhodanese domain; the sequence is FLEDTPLMDV…LRNFLFETTR (125 aa). Cysteine 95 functions as the S-selanylcysteine intermediate in the catalytic mechanism.

Belongs to the SelU family. As to quaternary structure, monomer.

It catalyses the reaction 5-methylaminomethyl-2-thiouridine(34) in tRNA + selenophosphate + (2E)-geranyl diphosphate + H2O + H(+) = 5-methylaminomethyl-2-selenouridine(34) in tRNA + (2E)-thiogeraniol + phosphate + diphosphate. The catalysed reaction is 5-methylaminomethyl-2-thiouridine(34) in tRNA + (2E)-geranyl diphosphate = 5-methylaminomethyl-S-(2E)-geranyl-thiouridine(34) in tRNA + diphosphate. The enzyme catalyses 5-methylaminomethyl-S-(2E)-geranyl-thiouridine(34) in tRNA + selenophosphate + H(+) = 5-methylaminomethyl-2-(Se-phospho)selenouridine(34) in tRNA + (2E)-thiogeraniol. It carries out the reaction 5-methylaminomethyl-2-(Se-phospho)selenouridine(34) in tRNA + H2O = 5-methylaminomethyl-2-selenouridine(34) in tRNA + phosphate. In terms of biological role, involved in the post-transcriptional modification of the uridine at the wobble position (U34) of tRNA(Lys), tRNA(Glu) and tRNA(Gln). Catalyzes the conversion of 2-thiouridine (S2U-RNA) to 2-selenouridine (Se2U-RNA). Acts in a two-step process involving geranylation of 2-thiouridine (S2U) to S-geranyl-2-thiouridine (geS2U) and subsequent selenation of the latter derivative to 2-selenouridine (Se2U) in the tRNA chain. The chain is tRNA 2-selenouridine synthase from Pseudomonas paraeruginosa (strain DSM 24068 / PA7) (Pseudomonas aeruginosa (strain PA7)).